We begin with the raw amino-acid sequence, 537 residues long: Cytochrome P450 monooxygenase claR (537 aa).

The chain crosses the membrane as a helical span at residues 23–43 (VVTITEVALGIITLYLLGSYI). Residue C454 coordinates heme.

It belongs to the cytochrome P450 family. Heme serves as cofactor.

Its subcellular location is the membrane. It carries out the reaction (2E)-geranylhydroquinone + reduced [NADPH--hemoprotein reductase] + O2 = wigandol + oxidized [NADPH--hemoprotein reductase] + 2 H2O + H(+). The protein operates within secondary metabolite biosynthesis; terpenoid biosynthesis. Its function is as follows. Cytochrome P450 monooxygenase; part of the gene cluster that mediates the biosynthesis of clavilactone A, a meroterpenoid that features a unique benzo-fused ten-membered carbocyclic ring unit with an alpha,beta-epoxy-gamma-lactone moiety, forming an intriguing 10/5/3 tricyclic nested skeleton. ClaR, ClaS and ClaT are sufficient to produce clavilactone A. ClaR acts as a macrocyclase to catalyze the oxidative cyclization of the isopentenyl to the nonterpenoid moieties to form the benzo-fused macrocycle, leading to wigantol. The biosynthesis begins with the prenyltransferase claS that transfers geranyl pyrophosphate (GPP) to hydroquinone to produces geranylhydroquinone. The cytochrome P450 monooxygenase claR then catalyzes the diradical coupling reaction between the intramolecular hydroquinone and allyl moieties to form the benzo-fused ten-membered carbocyclic ring unit of wigantol. Finally the cytochrome P450 monooxygenase claT exquisitely and stereoselectively assembles the alpha,beta-epoxy-gamma-lactone moiety, producing clavilactone A via arnebinol A. The protein is Cytochrome P450 monooxygenase claR of Ampulloclitocybe clavipes (Club foot).